The sequence spans 111 residues: MSIAVGMIETLGFPAVVEAADSMVKAARVTLVGYEKIGSGRVTVIVRGDVSEVQASVTAGIENIRRVNGGEVLSNHIIARPHENLEYVLPIRYTEAVEQFREIVNPSIIRR.

Residues 4 to 90 (AVGMIETLGF…PHENLEYVLP (87 aa)) enclose the BMC domain.

It belongs to the bacterial microcompartments protein family. CcmK subfamily. Homohexamer. Interacts with full-length CcmM. Forms mixed heterohexamers of all possible stoichiometries with CcmK2, which might form dodecamers. Only very weak interactions with CcmK3 and CcmK4 were seen. Interacts with CcmN and CcmO in the carboxysome.

It is found in the carboxysome. Its function is as follows. One of the shell proteins of the carboxysome, a polyhedral inclusion where RuBisCO (ribulose bisphosphate carboxylase, rbcL-rbcS) is sequestered. Assembles into hexamers which make sheets that form the facets of the polyhedral carboxysome. The hexamer central pore probably regulates metabolite flux. Probably the major shell protein of the carboxysome, a polyhedral inclusion where RuBisCO (ribulose bisphosphate carboxylase, rbcL-rbcS) is sequestered. The central pore probably regulates metabolite flux. Hexamers make sheets that form the facets of the carboxysome. The protein is Carboxysome shell protein CcmK1 of Synechocystis sp. (strain ATCC 27184 / PCC 6803 / Kazusa).